The sequence spans 348 residues: Peptide-N(4)-(N-acetyl-beta-glucosaminyl)asparagine amidase (348 aa).

Zn(2+) is bound by residues C116, C119, C151, and C154. C177 functions as the Nucleophile in the catalytic mechanism. Catalysis depends on residues H204 and D221. A substrate-binding site is contributed by E224. A disordered region spans residues 311-348 (PSATPTKEMQKLKISKTGNKGRISGSAEWKESRGENGK). Over residues 338–348 (EWKESRGENGK) the composition is skewed to basic and acidic residues.

It belongs to the transglutaminase-like superfamily. PNGase family. The cofactor is Zn(2+).

Its subcellular location is the cytoplasm. The catalysed reaction is Hydrolysis of an N(4)-(acetyl-beta-D-glucosaminyl)asparagine residue in which the glucosamine residue may be further glycosylated, to yield a (substituted) N-acetyl-beta-D-glucosaminylamine and a peptide containing an aspartate residue.. In terms of biological role, specifically deglycosylates the denatured form of N-linked glycoproteins in the cytoplasm and assists their proteasome-mediated degradation. Cleaves the beta-aspartyl-glucosamine (GlcNAc) of the glycan and the amide side chain of Asn, converting Asn to Asp. Prefers proteins containing high-mannose over those bearing complex type oligosaccharides. Can recognize misfolded proteins in the endoplasmic reticulum that are exported to the cytosol to be destroyed and deglycosylate them, while it has no activity toward native proteins. Deglycosylation is a prerequisite for subsequent proteasome-mediated degradation of some, but not all, misfolded glycoproteins. This is Peptide-N(4)-(N-acetyl-beta-glucosaminyl)asparagine amidase (PNG1) from Candida glabrata (strain ATCC 2001 / BCRC 20586 / JCM 3761 / NBRC 0622 / NRRL Y-65 / CBS 138) (Yeast).